Here is a 926-residue protein sequence, read N- to C-terminus: Serine/threonine-protein kinase pakE (926 aa).

Residues 36 to 55 are compositionally biased toward polar residues; the sequence is SSRELPTQDSSTKTSNITTP. 2 disordered regions span residues 36-257 and 546-576; these read SSRE…RPKL and QLNN…TTTT. A compositionally biased stretch (low complexity) spans 56-107; that stretch reads NNNNNNNNNNNNNNNNNNNNNNNNNNNNNNNNNNNNNNNNNNNNNNNNNNNN. The span at 108–117 shows a compositional bias: polar residues; it reads TPTSLNSSWK. Residues 134 to 173 are compositionally biased toward low complexity; the sequence is NNNNNVGSPNNQSTSQTNHQQPPPQQLQQQQSLSSTSTPS. Positions 183 to 204 are enriched in polar residues; it reads RRNVTSPNLTRSDPTVPITNSR. Low complexity predominate over residues 215 to 253; sequence PQFQLNNLNFDDNNDHSTTTTNNNNNNNNNNSNNNNNNN. The stretch at 534 to 567 forms a coiled coil; sequence LDFEKELKENQQQLNNNNNNNNNNNNNNNNNNNN. Residues 650-903 enclose the Protein kinase domain; it reads FEFKEKLGQG…VIDLLSHDFI (254 aa). ATP is bound by residues 656 to 664 and Lys-679; that span reads LGQGGYGAV. The active-site Proton acceptor is Asp-771.

It belongs to the protein kinase superfamily. STE Ser/Thr protein kinase family. STE20 subfamily. Mg(2+) serves as cofactor.

It carries out the reaction L-seryl-[protein] + ATP = O-phospho-L-seryl-[protein] + ADP + H(+). The enzyme catalyses L-threonyl-[protein] + ATP = O-phospho-L-threonyl-[protein] + ADP + H(+). In terms of biological role, may play a role in responding to changes in chemoattractant levels. The polypeptide is Serine/threonine-protein kinase pakE (Dictyostelium discoideum (Social amoeba)).